An 825-amino-acid polypeptide reads, in one-letter code: E3 ubiquitin-protein ligase ICP0 (825 aa).

Over residues 1–10 (MEPRPGTSSR) the composition is skewed to polar residues. Residues 1-121 (MEPRPGTSSR…VGEEEAEAGG (121 aa)) are disordered. Over residues 46 to 57 (DSEEETEVGISD) the composition is skewed to acidic residues. An RING-type zinc finger spans residues 126–167 (CAVCTDEIAPPLRCQSFPCLHPFCIPCMKTWIPLRNTCPLCN). 3 disordered regions span residues 221–312 (RSLS…GGGP), 325–683 (PPAA…PAPG), and 803–825 (RHPW…GHGE). Positions 242-251 (TDDEDDDLAD) are enriched in acidic residues. Composition is skewed to low complexity over residues 273 to 283 (TRGTSQPAATR), 290 to 303 (PRSS…LRAG), and 350 to 367 (PPAR…VISD). Over residues 368–379 (SPPPSPRRPAGP) the composition is skewed to pro residues. Low complexity-rich tracts occupy residues 380–394 (GPLS…QVSS) and 402–439 (PQSS…DAAG). The segment covering 456–468 (RMTQAQTDTQAQS) has biased composition (polar residues). Positions 479–491 (GSGGPGAEGGPGV) are enriched in gly residues. 2 stretches are compositionally biased toward low complexity: residues 492 to 510 (PRGT…GAAA) and 519 to 540 (DSGP…PLAP). A compositionally biased stretch (basic and acidic residues) spans 552 to 563 (RAPDSDSGDRGH). Residues 567–641 (APASAGAAPP…GGSVASASGA (75 aa)) show a composition bias toward low complexity. Residues 658–667 (GPRKCARKTR) show a composition bias toward basic residues. Low complexity predominate over residues 811-825 (GAPAPAGDAPAGHGE).

Auto-ubiquitinated.

The enzyme catalyses S-ubiquitinyl-[E2 ubiquitin-conjugating enzyme]-L-cysteine + [acceptor protein]-L-lysine = [E2 ubiquitin-conjugating enzyme]-L-cysteine + N(6)-ubiquitinyl-[acceptor protein]-L-lysine.. In terms of biological role, evades nuclear antiviral defenses triggered by dsDNA viruses. Acts during the initial stages of lytic infection and the reactivation of latent viral genome. Prevents the antiviral effect of nuclear bodies by degrading host PML and SP100. Prevents antiviral response to viral DNA induced by IFI16 by degrading it. Additionally, inhibits host IRF3 nuclear signaling to prevent interferon production by the infected cells. The sequence is that of E3 ubiquitin-protein ligase ICP0 (RL2) from Homo sapiens (Human).